We begin with the raw amino-acid sequence, 147 residues long: Putative protein CLUHP3 (147 aa).

The disordered stretch occupies residues 14–47 (KEPEGGRRRLSHPGNMGWMRPSQETTPPDRSHHS).

This is Putative protein CLUHP3 (CLUHP3) from Homo sapiens (Human).